A 423-amino-acid chain; its full sequence is Protein CLP1 homolog (423 aa).

Residues Glu16, Lys57, and 119–124 (DVGKST) each bind ATP.

This sequence belongs to the Clp1 family. Clp1 subfamily.

The protein localises to the nucleus. In terms of biological role, required for endonucleolytic cleavage during polyadenylation-dependent pre-mRNA 3'-end formation. The protein is Protein CLP1 homolog (cbc) of Drosophila sechellia (Fruit fly).